The sequence spans 318 residues: Protein W (318 aa).

Disordered stretches follow at residues 1-23 and 38-318; these read MDQDAFILKEDSEVEREAPGGRE and SEPT…KKGA. Over residues 7–20 the composition is skewed to basic and acidic residues; it reads ILKEDSEVEREAPG. Positions 50–59 are enriched in polar residues; the sequence is LHNTINTPQG. Ser68 carries the phosphoserine; by host modification. The segment covering 83 to 101 has biased composition (basic and acidic residues); that stretch reads RSGEESRVSGRTSKPEAEA. Ser125 carries the phosphoserine; by host modification. A compositionally biased stretch (basic and acidic residues) spans 150–168; that stretch reads GIEDENREMAAHPDKRGED. The span at 191 to 206 shows a compositional bias: polar residues; sequence ASNNGRSMEPGSSHSA. Residues Ser192, Ser249, Ser257, and Ser260 each carry the phosphoserine; by host modification.

The protein is Protein W (P/V/C) of Sendai virus (strain Fushimi) (SeV).